The following is a 215-amino-acid chain: Pyrrolidone-carboxylate peptidase (215 aa).

Active-site residues include E80, C143, and H167.

It belongs to the peptidase C15 family. As to quaternary structure, homotetramer.

It localises to the cytoplasm. The enzyme catalyses Release of an N-terminal pyroglutamyl group from a polypeptide, the second amino acid generally not being Pro.. Removes 5-oxoproline from various penultimate amino acid residues except L-proline. This chain is Pyrrolidone-carboxylate peptidase, found in Bacillus cereus (strain 03BB102).